The primary structure comprises 155 residues: Ribosomal RNA large subunit methyltransferase H (155 aa).

S-adenosyl-L-methionine-binding positions include leucine 72, glycine 103, and 122–127 (LSPLTL).

Belongs to the RNA methyltransferase RlmH family. Homodimer.

The protein localises to the cytoplasm. It catalyses the reaction pseudouridine(1915) in 23S rRNA + S-adenosyl-L-methionine = N(3)-methylpseudouridine(1915) in 23S rRNA + S-adenosyl-L-homocysteine + H(+). Functionally, specifically methylates the pseudouridine at position 1915 (m3Psi1915) in 23S rRNA. The chain is Ribosomal RNA large subunit methyltransferase H from Histophilus somni (strain 129Pt) (Haemophilus somnus).